We begin with the raw amino-acid sequence, 354 residues long: Ornithine carbamoyltransferase, catabolic (354 aa).

Carbamoyl phosphate-binding positions include 67–70 (STRT), Q94, R118, and 145–148 (HPTQ). L-ornithine contacts are provided by residues N177, D241, and 245–246 (SM). Carbamoyl phosphate contacts are provided by residues 284–285 (CL) and R329.

The protein belongs to the aspartate/ornithine carbamoyltransferase superfamily. OTCase family.

The protein localises to the cytoplasm. The catalysed reaction is carbamoyl phosphate + L-ornithine = L-citrulline + phosphate + H(+). It functions in the pathway amino-acid degradation; L-arginine degradation via ADI pathway; carbamoyl phosphate from L-arginine: step 2/2. Functionally, reversibly catalyzes the transfer of the carbamoyl group from carbamoyl phosphate (CP) to the N(epsilon) atom of ornithine (ORN) to produce L-citrulline. This chain is Ornithine carbamoyltransferase, catabolic (arcB), found in Lactococcus lactis subsp. lactis (strain IL1403) (Streptococcus lactis).